The following is a 294-amino-acid chain: 4-hydroxy-tetrahydrodipicolinate synthase (294 aa).

Threonine 47 serves as a coordination point for pyruvate. Tyrosine 135 acts as the Proton donor/acceptor in catalysis. The active-site Schiff-base intermediate with substrate is the lysine 163. Threonine 205 contacts pyruvate.

The protein belongs to the DapA family. In terms of assembly, homotetramer; dimer of dimers.

The protein localises to the cytoplasm. The enzyme catalyses L-aspartate 4-semialdehyde + pyruvate = (2S,4S)-4-hydroxy-2,3,4,5-tetrahydrodipicolinate + H2O + H(+). It participates in amino-acid biosynthesis; L-lysine biosynthesis via DAP pathway; (S)-tetrahydrodipicolinate from L-aspartate: step 3/4. Its function is as follows. Catalyzes the condensation of (S)-aspartate-beta-semialdehyde [(S)-ASA] and pyruvate to 4-hydroxy-tetrahydrodipicolinate (HTPA). In Rickettsia rickettsii, this protein is 4-hydroxy-tetrahydrodipicolinate synthase.